The sequence spans 287 residues: Ribosomal RNA-processing protein 8 (287 aa).

The tract at residues 1-62 is disordered; sequence MTTEENKTSR…SAPSKRPKPS (62 aa). Basic residues predominate over residues 9 to 21; that stretch reads SRNRKRKRQRNPK. The segment covering 35–46 has biased composition (basic and acidic residues); it reads QNEKKNQRDTKN. S-adenosyl-L-methionine-binding residues include H107, G142, D160, D172, M173, and C189.

The protein belongs to the methyltransferase superfamily. RRP8 family.

It localises to the nucleus. Its subcellular location is the nucleolus. Probable methyltransferase required to silence rDNA. In Arabidopsis thaliana (Mouse-ear cress), this protein is Ribosomal RNA-processing protein 8.